Consider the following 89-residue polypeptide: Large ribosomal subunit protein bL27 (89 aa).

The tract at residues 1–22 (MAHKKAGGSSRNGRDSAGRRLG) is disordered.

It belongs to the bacterial ribosomal protein bL27 family.

This Sphingopyxis alaskensis (strain DSM 13593 / LMG 18877 / RB2256) (Sphingomonas alaskensis) protein is Large ribosomal subunit protein bL27.